The sequence spans 397 residues: Potassium channel subfamily K member 4 (397 aa).

The Cytoplasmic segment spans residues 1–3 (MRS). The chain crosses the membrane as a helical span at residues 4-24 (TTLLALLALVLLYLVSGALVF). At 25–88 (QALEQPHEQQ…WTNSSNHSSA (64 aa)) the chain is on the extracellular side. A glycan (N-linked (GlcNAc...) asparagine) is linked at N81. The segment at residues 89–103 (WNLGSAFFFSGTIIT) is an intramembrane region (helical). Positions 104, 105, 106, and 107 each coordinate K(+). The tract at residues 104–109 (TIGYGN) is selectivity filter 1. Residues 104 to 110 (TIGYGNI) lie within the membrane without spanning it. Over 111-118 (ALHTDAGR) the chain is Extracellular. A helical transmembrane segment spans residues 119–151 (LFCIFYALVGIPLFGMLLAGVGDRLGSSLRRGI). Topologically, residues 152–173 (GHIEAVFLKWHVPPGLVRMLSA) are cytoplasmic. Residues 174 to 195 (VLFLLIGCLLFVLTPTFVFSYM) form a helical membrane-spanning segment. Residues 196–200 (ESWSK) are Extracellular-facing. Residues 201-214 (LEAIYFVIVTLTTV) constitute an intramembrane region (helical). Residues T213, V214, G215, and F216 each contribute to the K(+) site. Residues 213-218 (TVGFGD) form a selectivity filter 2 region. An intramembrane segment occupies 215–220 (GFGDYV). The Extracellular portion of the chain corresponds to 221-234 (PGDGTGQNSPAYQP). The helical transmembrane segment at 235-261 (LVWFWILFGLAYFASVLTTIGNWLRAV) threads the bilayer. The Cytoplasmic portion of the chain corresponds to 262–397 (SRRTRAEMGG…GRLRDKAVPV (136 aa)). The segment covering 282–292 (TVTARVTQRTG) has biased composition (polar residues). Residues 282 to 397 (TVTARVTQRT…GRLRDKAVPV (116 aa)) are disordered. The segment covering 369 to 388 (PRGRRRPNPTKKPSRPRGPG) has biased composition (basic residues).

It belongs to the two pore domain potassium channel (TC 1.A.1.8) family. Homodimer; disulfide-linked. Forms heterodimers with other 2-pore domain K(+) channel subunits, such as KCNK2 and KCNK10. As to expression, detected in brain, and at much lower levels in liver, skeletal muscle and testis.

It is found in the cell membrane. The protein localises to the cell projection. Its subcellular location is the axon. It carries out the reaction K(+)(in) = K(+)(out). It catalyses the reaction Rb(+)(in) = Rb(+)(out). The catalysed reaction is Cs(+)(in) = Cs(+)(out). Its activity is regulated as follows. Activated by various stimuli including intracellular basic pH, mechanical stretch and heat and polyunsaturated fatty acids such as arachidonic acid. K(+) channel that conducts voltage-dependent outward rectifying currents upon membrane depolarization. Voltage sensing is coupled to K(+) electrochemical gradient in an 'ion flux gating' mode where outward but not inward ion flow opens the gate. Converts to voltage-independent 'leak' conductance mode upon stimulation by various stimuli including mechanical membrane stretch, basic pH, heat and lipids. Homo- and heterodimerizes to form functional channels with distinct regulatory and gating properties. At trigeminal A-beta afferent nerves, the heterodimer of KCNK2/TREK-1 and KCNK4/TRAAK is mostly coexpressed at nodes of Ranvier where it conducts voltage-independent mechanosensitive and thermosensitive currents, allowing rapid action potential repolarization, high speed and high frequence saltatory conduction on myelinated nerves to ensure prompt sensory responses. Permeable to other monovalent cations such as Rb(+) and Cs(+). The chain is Potassium channel subfamily K member 4 from Rattus norvegicus (Rat).